We begin with the raw amino-acid sequence, 39 residues long: Cytochrome b6-f complex subunit 5 (39 aa).

Residues 5–25 (LLCGIVLGLVPITLLGLFVSA) traverse the membrane as a helical segment.

It belongs to the PetG family. The 4 large subunits of the cytochrome b6-f complex are cytochrome b6, subunit IV (17 kDa polypeptide, PetD), cytochrome f and the Rieske protein, while the 4 small subunits are PetG, PetL, PetM and PetN. The complex functions as a dimer.

Its subcellular location is the cellular thylakoid membrane. Component of the cytochrome b6-f complex, which mediates electron transfer between photosystem II (PSII) and photosystem I (PSI), cyclic electron flow around PSI, and state transitions. PetG is required for either the stability or assembly of the cytochrome b6-f complex. In Prochlorococcus marinus (strain MIT 9301), this protein is Cytochrome b6-f complex subunit 5.